Here is a 370-residue protein sequence, read N- to C-terminus: Cobalt-precorrin-5B C(1)-methyltransferase (370 aa).

This sequence belongs to the CbiD family.

The enzyme catalyses Co-precorrin-5B + S-adenosyl-L-methionine = Co-precorrin-6A + S-adenosyl-L-homocysteine. The protein operates within cofactor biosynthesis; adenosylcobalamin biosynthesis; cob(II)yrinate a,c-diamide from sirohydrochlorin (anaerobic route): step 6/10. In terms of biological role, catalyzes the methylation of C-1 in cobalt-precorrin-5B to form cobalt-precorrin-6A. This is Cobalt-precorrin-5B C(1)-methyltransferase from Pseudomonas syringae pv. syringae (strain B728a).